Reading from the N-terminus, the 420-residue chain is D-tagatose-1,6-bisphosphate aldolase subunit GatZ (420 aa).

It belongs to the GatZ/KbaZ family. GatZ subfamily. In terms of assembly, forms a complex with GatY.

It participates in carbohydrate metabolism; D-tagatose 6-phosphate degradation; D-glyceraldehyde 3-phosphate and glycerone phosphate from D-tagatose 6-phosphate: step 2/2. In terms of biological role, component of the tagatose-1,6-bisphosphate aldolase GatYZ that is required for full activity and stability of the Y subunit. Could have a chaperone-like function for the proper and stable folding of GatY. When expressed alone, GatZ does not show any aldolase activity. Is involved in the catabolism of galactitol. The chain is D-tagatose-1,6-bisphosphate aldolase subunit GatZ from Escherichia coli (strain SE11).